A 208-amino-acid polypeptide reads, in one-letter code: MNILHNFVVFEGIDGTGTSTQLRALERHFQARKDMVFTQEPTGGEIGTLIRDVLQKRVIMSSKALGLLFAADRHEHLEGAGGINDCLAEGKIVLCDRYVFSSLVYQGMAVSGSFAYELNKEFPLPEVVFYFDAPIEVCVERITARGLQTELYEYTSFQEKARKGYETIFRKCRHLYPAMKVIEIDAREEIEVVHERILHHLREYRRLK.

Residues 12–19 (GIDGTGTS) form a defective ATP-binding region.

The protein belongs to the thymidylate kinase family.

It carries out the reaction dTMP + ATP = dTDP + ADP. The chain is Putative thymidylate kinase (tmk) from Treponema pallidum (strain Nichols).